Reading from the N-terminus, the 365-residue chain is MMQRVVLHIDMDYFFAAIEERENPELREKAVVVCMLSGRSELSGSVSTCNYVAREFGIRSGMPCSRAKKLNPEAVFLPVRKDFYTSVSDRIMEILRSYADPGNGDSFEQISVDEAFLESSERTGGDFRLAFEVGMQIKKEIKEKENLTCSIGIGPNKLISKMASSAKKPDGITVVSPQDLEAFLWPLNVSKLWGIGSVTAGKLQEMGIVTVKDLAERDVIELISIFGKSRGTWLKQAASGIDDSPLKERDGSEQIGRIATLPEDSLDKKLISSLIERLAGDVIEKLDSRELSFRIVTVTVINSNFRMYTKSRTLSHPVSSKEVLLQVSGEILDEFLSENRTEFRRVGVRVGGLQKKKGQKSLFDY.

Residues 6-196 (VLHIDMDYFF…LNVSKLWGIG (191 aa)) form the UmuC domain. Aspartate 10 and aspartate 113 together coordinate Mg(2+). The active site involves glutamate 114.

It belongs to the DNA polymerase type-Y family. As to quaternary structure, monomer. Mg(2+) serves as cofactor.

It localises to the cytoplasm. It catalyses the reaction DNA(n) + a 2'-deoxyribonucleoside 5'-triphosphate = DNA(n+1) + diphosphate. Its function is as follows. Poorly processive, error-prone DNA polymerase involved in untargeted mutagenesis. Copies undamaged DNA at stalled replication forks, which arise in vivo from mismatched or misaligned primer ends. These misaligned primers can be extended by PolIV. Exhibits no 3'-5' exonuclease (proofreading) activity. May be involved in translesional synthesis. In Methanosarcina mazei (strain ATCC BAA-159 / DSM 3647 / Goe1 / Go1 / JCM 11833 / OCM 88) (Methanosarcina frisia), this protein is DNA polymerase IV 1 (dbh1).